We begin with the raw amino-acid sequence, 95 residues long: ESAT-6-like protein EsxA (95 aa).

Belongs to the WXG100 family. ESAT-6 subfamily. As to quaternary structure, forms a tight 1:1 complex with EsxB.

This Corynebacterium diphtheriae (strain ATCC 700971 / NCTC 13129 / Biotype gravis) protein is ESAT-6-like protein EsxA.